The following is a 2455-amino-acid chain: Ectopic P granules protein 5 homolog (2455 aa).

The segment at 1 to 42 (MATLEKPKKEKSKKSRNRVPIEKEEEEPAELSTSEEQRPAEN) is disordered. At Ser44 the chain carries Phosphoserine. The tract at residues 77-105 (VTSQEPEGTQEPTETEAQPSAPSAPPSTT) is disordered. Low complexity predominate over residues 80 to 97 (QEPEGTQEPTETEAQPSA). At Ser467 the chain carries Phosphoserine.

The protein belongs to the EPG5 family.

It localises to the cytoplasm. The protein localises to the perinuclear region. It is found in the lysosome. Involved in autophagy. Plays a role in late steps of autophagy. This chain is Ectopic P granules protein 5 homolog, found in Drosophila melanogaster (Fruit fly).